A 209-amino-acid polypeptide reads, in one-letter code: Large ribosomal subunit protein uL3 (209 aa).

The interval 127 to 152 (SGGPSSHGSKFHRHLGSTGQAATPSR) is disordered. The segment covering 143–152 (STGQAATPSR) has biased composition (polar residues).

This sequence belongs to the universal ribosomal protein uL3 family. Part of the 50S ribosomal subunit. Forms a cluster with proteins L14 and L19.

Its function is as follows. One of the primary rRNA binding proteins, it binds directly near the 3'-end of the 23S rRNA, where it nucleates assembly of the 50S subunit. The chain is Large ribosomal subunit protein uL3 from Borrelia hermsii (strain HS1 / DAH).